Here is a 136-residue protein sequence, read N- to C-terminus: Nuclear receptor 2C2-associated protein (136 aa).

Belongs to the NR2C2AP family.

It localises to the nucleus. May act as a repressor of nr2c2-mediated transactivation by suppressing the binding between nr2c2 and its response element in target genes. The protein is Nuclear receptor 2C2-associated protein (nr2c2ap) of Xenopus laevis (African clawed frog).